The following is a 455-amino-acid chain: Anaerobic glycerol-3-phosphate dehydrogenase subunit B (455 aa).

This sequence belongs to the anaerobic G-3-P dehydrogenase subunit B family. In terms of assembly, composed of a catalytic GlpA/B dimer and of membrane bound GlpC. FMN is required as a cofactor.

The catalysed reaction is a quinone + sn-glycerol 3-phosphate = dihydroxyacetone phosphate + a quinol. Its pathway is polyol metabolism; glycerol degradation via glycerol kinase pathway; glycerone phosphate from sn-glycerol 3-phosphate (anaerobic route): step 1/1. Functionally, conversion of glycerol 3-phosphate to dihydroxyacetone. Uses fumarate or nitrate as electron acceptor. The sequence is that of Anaerobic glycerol-3-phosphate dehydrogenase subunit B from Aliivibrio fischeri (strain MJ11) (Vibrio fischeri).